Here is a 134-residue protein sequence, read N- to C-terminus: Small ribosomal subunit protein uS8c (134 aa).

This sequence belongs to the universal ribosomal protein uS8 family. In terms of assembly, part of the 30S ribosomal subunit.

Its subcellular location is the plastid. It is found in the chloroplast. Its function is as follows. One of the primary rRNA binding proteins, it binds directly to 16S rRNA central domain where it helps coordinate assembly of the platform of the 30S subunit. The chain is Small ribosomal subunit protein uS8c (rps8) from Arabidopsis thaliana (Mouse-ear cress).